A 428-amino-acid chain; its full sequence is Trigger factor (428 aa).

The region spanning 163-248 is the PPIase FKBP-type domain; sequence GDMVIIDYKG…IHEIKEKEVP (86 aa).

It belongs to the FKBP-type PPIase family. Tig subfamily.

Its subcellular location is the cytoplasm. The catalysed reaction is [protein]-peptidylproline (omega=180) = [protein]-peptidylproline (omega=0). Involved in protein export. Acts as a chaperone by maintaining the newly synthesized protein in an open conformation. Functions as a peptidyl-prolyl cis-trans isomerase. The protein is Trigger factor of Alkaliphilus oremlandii (strain OhILAs) (Clostridium oremlandii (strain OhILAs)).